The primary structure comprises 302 residues: Vomeronasal type-1 receptor 48 (302 aa).

At Met-1–Thr-16 the chain is on the extracellular side. A helical membrane pass occupies residues Phe-17–Ile-37. At Lys-38–Asp-49 the chain is on the cytoplasmic side. The helical transmembrane segment at Leu-50–Ala-70 threads the bilayer. Residues Thr-71–Leu-91 lie on the Extracellular side of the membrane. Cys-85 and Cys-172 form a disulfide bridge. Residues Tyr-92–Leu-114 form a helical membrane-spanning segment. Over Ser-115–Asn-131 the chain is Cytoplasmic. A helical membrane pass occupies residues Ile-132–Ile-152. The Extracellular portion of the chain corresponds to Ser-153–Glu-193. A glycan (N-linked (GlcNAc...) asparagine) is linked at Asn-159. Residues Val-194–His-214 form a helical membrane-spanning segment. Topologically, residues Arg-215 to Gln-238 are cytoplasmic. Residues Thr-239–Cys-259 form a helical membrane-spanning segment. The Extracellular portion of the chain corresponds to Ser-260–Thr-269. The chain crosses the membrane as a helical span at residues Ser-270 to Ile-290. The Cytoplasmic portion of the chain corresponds to Ser-291–Gly-302.

Belongs to the G-protein coupled receptor 1 family.

Its subcellular location is the cell membrane. In terms of biological role, putative pheromone receptor implicated in the regulation of social and reproductive behavior. In Mus musculus (Mouse), this protein is Vomeronasal type-1 receptor 48 (Vmn1r48).